A 428-amino-acid chain; its full sequence is Flotillin-2 (428 aa).

The N-myristoyl glycine moiety is linked to residue Gly-2. Cys-4 carries the S-palmitoyl cysteine; by ZDHHC5 lipid modification. Residue Cys-19 is the site of S-palmitoyl cysteine attachment. Cys-20 carries the S-palmitoyl cysteine; by ZDHHC5 lipid modification. Phosphoserine is present on Ser-405.

Belongs to the band 7/mec-2 family. Flotillin subfamily. As to quaternary structure, heterooligomeric complex of flotillin-1 and flotillin-2 and caveolin-1 and caveolin-2. Interacts with ECPAS. Post-translationally, ZDHHC5-catalyzed palmitoylation may be required for the formation of higher-order complexes and for neurite outgrowth in cultured neural stem cells.

It localises to the cell membrane. The protein resides in the membrane. It is found in the caveola. Its subcellular location is the endosome. May act as a scaffolding protein within caveolar membranes, functionally participating in formation of caveolae or caveolae-like vesicles. May be involved in epidermal cell adhesion and epidermal structure and function. This chain is Flotillin-2 (FLOT2), found in Bos taurus (Bovine).